The following is a 211-amino-acid chain: FMN-dependent NADH:quinone oxidoreductase (211 aa).

Residues 17–19, 102–105, and 146–149 contribute to the FMN site; these read SNS, MWNL, and SRGG.

The protein belongs to the azoreductase type 1 family. Homodimer. FMN serves as cofactor.

The enzyme catalyses 2 a quinone + NADH + H(+) = 2 a 1,4-benzosemiquinone + NAD(+). It carries out the reaction N,N-dimethyl-1,4-phenylenediamine + anthranilate + 2 NAD(+) = 2-(4-dimethylaminophenyl)diazenylbenzoate + 2 NADH + 2 H(+). Quinone reductase that provides resistance to thiol-specific stress caused by electrophilic quinones. In terms of biological role, also exhibits azoreductase activity. Catalyzes the reductive cleavage of the azo bond in aromatic azo compounds to the corresponding amines. This is FMN-dependent NADH:quinone oxidoreductase from Macrococcus caseolyticus (strain JCSC5402) (Macrococcoides caseolyticum).